We begin with the raw amino-acid sequence, 98 residues long: NADH-ubiquinone oxidoreductase chain 4L (98 aa).

The next 3 helical transmembrane spans lie at 1-21 (MSMV…GMLV), 29-49 (SLLC…VTIL), and 61-81 (IVLL…LVMV).

It belongs to the complex I subunit 4L family. Core subunit of respiratory chain NADH dehydrogenase (Complex I) which is composed of 45 different subunits.

The protein resides in the mitochondrion inner membrane. The catalysed reaction is a ubiquinone + NADH + 5 H(+)(in) = a ubiquinol + NAD(+) + 4 H(+)(out). Its function is as follows. Core subunit of the mitochondrial membrane respiratory chain NADH dehydrogenase (Complex I) which catalyzes electron transfer from NADH through the respiratory chain, using ubiquinone as an electron acceptor. Part of the enzyme membrane arm which is embedded in the lipid bilayer and involved in proton translocation. In Canis latrans (Coyote), this protein is NADH-ubiquinone oxidoreductase chain 4L (MT-ND4L).